The following is a 264-amino-acid chain: Thymidylate synthase (264 aa).

Arg21 provides a ligand contact to dUMP. (6R)-5,10-methylene-5,6,7,8-tetrahydrofolate is bound at residue His51. 126-127 (RR) is a dUMP binding site. Residue Cys146 is the Nucleophile of the active site. Residues 166–169 (RSVD), Asn177, and 207–209 (HLY) contribute to the dUMP site. Residue Asp169 participates in (6R)-5,10-methylene-5,6,7,8-tetrahydrofolate binding. Ala263 provides a ligand contact to (6R)-5,10-methylene-5,6,7,8-tetrahydrofolate.

Belongs to the thymidylate synthase family. Bacterial-type ThyA subfamily. In terms of assembly, homodimer.

It localises to the cytoplasm. It catalyses the reaction dUMP + (6R)-5,10-methylene-5,6,7,8-tetrahydrofolate = 7,8-dihydrofolate + dTMP. Its pathway is pyrimidine metabolism; dTTP biosynthesis. Catalyzes the reductive methylation of 2'-deoxyuridine-5'-monophosphate (dUMP) to 2'-deoxythymidine-5'-monophosphate (dTMP) while utilizing 5,10-methylenetetrahydrofolate (mTHF) as the methyl donor and reductant in the reaction, yielding dihydrofolate (DHF) as a by-product. This enzymatic reaction provides an intracellular de novo source of dTMP, an essential precursor for DNA biosynthesis. The chain is Thymidylate synthase from Geobacillus sp. (strain WCH70).